A 323-amino-acid chain; its full sequence is MEMNLRIEDLNEETKTLISSLPSDKDFTGKTICKYQGCWYTHNVLQAVLNFQKSFKPQDTDIIVASFPKCGTTWLKALTFALLHRSKQPSHDDDHPLLSNNPHVLVPYFEIDLYLRSENPDLTKFSSSPRLFSTHVPSHTLQEGLKGSTCKIVYISRNVKDTLVSYWHFFTKKQTDEKIISSFEDTFEMFCRGVSIFGPFWDHVLSYWRGSLEDPNHVLFMKFEEMKAEPRDQIKKFAEFLGCPFTKEEEESGSVDEIIDLCSLRNLSSLEINKTGKLNSGRENKMFFRKGEVGDWKNYLTPEMENKIDMIIQEKLQNSGLKF.

A 3'-phosphoadenylyl sulfate-binding site is contributed by 69–74; that stretch reads KCGTTW. The Proton acceptor role is filled by histidine 135. Residues arginine 157, serine 165, and 289–291 contribute to the 3'-phosphoadenylyl sulfate site; that span reads RKG.

It belongs to the sulfotransferase 1 family. Expressed in inflorescence stems, roots and siliques.

The protein resides in the cytoplasm. Its function is as follows. Sulfotransferase that utilizes 3'-phospho-5'-adenylyl sulfate (PAPS) as sulfonate donor to specifically catalyze the sulfate conjugation of flavones and flavonols. Strictly specific for the position 7. Substrate preference is kaempferol 3-sulfate &gt; isorhamnetin &gt; kaempferol. This chain is Cytosolic sulfotransferase 5 (SOT5), found in Arabidopsis thaliana (Mouse-ear cress).